The sequence spans 306 residues: Ribonuclease HIII (306 aa).

Residues 87 to 302 (WSVVGSDEVG…TKKAEALAKK (216 aa)) enclose the RNase H type-2 domain. 3 residues coordinate a divalent metal cation: D93, E94, and D196.

This sequence belongs to the RNase HII family. RnhC subfamily. Mn(2+) is required as a cofactor. It depends on Mg(2+) as a cofactor.

Its subcellular location is the cytoplasm. It catalyses the reaction Endonucleolytic cleavage to 5'-phosphomonoester.. Functionally, endonuclease that specifically degrades the RNA of RNA-DNA hybrids. This chain is Ribonuclease HIII, found in Exiguobacterium sibiricum (strain DSM 17290 / CCUG 55495 / CIP 109462 / JCM 13490 / 255-15).